A 275-amino-acid chain; its full sequence is Adenylate kinase (275 aa).

54–59 (GAGKGT) contributes to the ATP binding site. The tract at residues 74–103 (ATGDMLRSQVAKKTPLGREAKKIMDQGGLV) is NMP. AMP contacts are provided by residues Thr-75, Arg-80, 101–103 (GLV), 130–133 (GFPR), and Gln-137. The interval 171-208 (GRLVHPASGRSYHRVFNPPKAEMKDDITGEPLVSRSDD) is LID. ATP is bound by residues Arg-172 and 181-182 (SY). Positions 205 and 216 each coordinate AMP. Position 244 (Gln-244) interacts with ATP.

It belongs to the adenylate kinase family. AK2 subfamily. Monomer.

It is found in the cytoplasm. It localises to the cytosol. The protein resides in the mitochondrion intermembrane space. It catalyses the reaction AMP + ATP = 2 ADP. Its function is as follows. Catalyzes the reversible transfer of the terminal phosphate group between ATP and AMP. Plays an important role in cellular energy homeostasis and in adenine nucleotide metabolism. Adenylate kinase activity is critical for regulation of the phosphate utilization and the AMP de novo biosynthesis pathways. The sequence is that of Adenylate kinase (adk1) from Sclerotinia sclerotiorum (strain ATCC 18683 / 1980 / Ss-1) (White mold).